We begin with the raw amino-acid sequence, 247 residues long: Cell division protein ZapD (247 aa).

This sequence belongs to the ZapD family. Interacts with FtsZ.

Its subcellular location is the cytoplasm. In terms of biological role, cell division factor that enhances FtsZ-ring assembly. Directly interacts with FtsZ and promotes bundling of FtsZ protofilaments, with a reduction in FtsZ GTPase activity. The protein is Cell division protein ZapD of Escherichia coli O157:H7.